A 1435-amino-acid chain; its full sequence is MGARASVLSGGELDKWEKIRLRPGGKKQYKLKHIVWASRELERFAVNPGLLETSEGCRQILGQLQPSLQTGSEELRSLYNTIAVLYCVHQRIDVKDTKEALDKIEEEQNKSKKKAQQAAADTGNNSQVSQNYPIVQNLQGQMVHQAISPRTLNAWVKVVEEKAFSPEVIPMFSALSEGATPQDLNTMLNTVGGHQAAMQMLKETINEEAAEWDRLHPVHAGPIAPGQMREPRGSDIAGTTSTLQEQIGWMTHNPPIPVGEIYKRWIILGLNKIVRMYSPTSILDIRQGPKEPFRDYVDRFYKTLRAEQASQEVKNWMTETLLVQNANPDCKTILKALGPGATLEEMMTACQGVGGPGHKARVLAEAMSQVTNPATIMIQKGNFRNQRKTVKCFNCGKEGHIAKNCRAPRKKGCWKCGKEGHQMKDCTERQANFLREDLAFPQGKAREFSSEQTRANSPTRRELQVWGRDNNSLSEAGADRQGTVSFSFPQITLWQRPLVTIKIGGQLKEALLDTGADDTVLEEMNLPGRWKPKMIGGIGGFIKVRQYDQILIEICGHKAIGTVLVGPTPVNIIGRNLLTQIGCTLNFPISPIETVPVKLKPGMDGPKVKQWPLTEEKIKALVEICTEMEKEGKISKIGPENPYNTPVFAIKKKDSTKWRKLVDFRELNKRTQDFWEVQLGIPHPAGLKQKKSVTVLDVGDAYFSVPLDKDFRKYTAFTIPSINNETPGIRYQYNVLPQGWKGSPAIFQCSMTKILEPFRKQNPDIVIYQYMDDLYVGSDLEIGQHRTKIEELRQHLLRWGFTTPDKKHQKEPPFLWMGYELHPDKWTVQPIVLPEKDSWTVNDIQKLVGKLNWASQIYAGIKVRQLCKLLRGTKALTEVVPLTEEAELELAENREILKEPVHGVYYDPSKDLIAEIQKQGQGQWTYQIYQEPFKNLKTGKYARMKGAHTNDVKQLTEAVQKIATESIVIWGKTPKFKLPIQKETWEAWWTEYWQATWIPEWEFVNTPPLVKLWYQLEKEPIIGAETFYVDGAANRETKLGKAGYVTDRGRQKVVPLTDTTNQKTELQAIHLALQDSGLEVNIVTDSQYALGIIQAQPDKSESELVSQIIEQLIKKEKVYLAWVPAHKGIGGNEQVDGLVSAGIRKVLFLDGIDKAQEEHEKYHSNWRAMASDFNLPPVVAKEIVASCDKCQLKGEAMHGQVDCSPGIWQLDCTHLEGKVILVAVHVASGYIEAEVIPAETGQETAYFLLKLAGRWPVKTVHTDNGSNFTSTTVKAACWWAGIKQEFGIPYNPQSQGVIESMNKELKKIIGQVRDQAEHLKTAVQMAVFIHNFKRKGGIGGYSAGERIVDIIATDIQTKELQKQITKIQNFRVYYRDSRDPVWKGPAKLLWKGEGAVVIQDNSDIKVVPRRKAKIIRDYGKQMAGDDCVASRQDED.

A lipid anchor (N-myristoyl glycine; by host) is attached at Gly2. The interval Val7–Leu31 is interaction with Gp41. The interval Leu8 to Arg43 is interaction with host CALM1. Residues Glu12–Ile19 form an interaction with host AP3D1 region. Positions Asp14–His33 are interaction with membrane phosphatidylinositol 4,5-bisphosphate and RNA. A Nuclear export signal motif is present at residues Trp16–Arg22. A Nuclear localization signal motif is present at residues Lys26–Lys32. The interval Glu73 to Ser77 is interaction with membrane phosphatidylinositol 4,5-bisphosphate. Residues Glu106–Val128 form a disordered region. Phosphotyrosine; by host is present on Tyr132. At Ser148 the chain carries Phosphoserine; by host MAPK1. Residues Asn189 to Gln227 form an interaction with human PPIA/CYPA and NUP153 region. The dimerization/Multimerization of capsid protein p24 stretch occupies residues Tyr277–Leu363. 2 consecutive CCHC-type zinc fingers follow at residues Val390–Ala407 and Lys411–Glu428. Residues Lys444–Gln464 are disordered. The segment at Pro489–Leu493 is dimerization of protease. In terms of domain architecture, Peptidase A2 spans Lys508 to Leu577. Residue Asp513 is the For protease activity; shared with dimeric partner of the active site. Dimerization of protease regions lie at residues Gly537–Lys543 and Asn576–Pro588. Positions Glu631–Leu821 constitute a Reverse transcriptase domain. Asp697, Asp772, and Asp773 together coordinate Mg(2+). Residues Phe814–His822 are RT 'primer grip'. The short motif at Trp985–Trp1001 is the Tryptophan repeat motif element. The region spanning Ile1021–Arg1144 is the RNase H type-1 domain. Residues Asp1030, Glu1065, Asp1085, and Asp1136 each contribute to the Mg(2+) site. The Integrase-type zinc-finger motif lies at Asp1150–Gln1191. Zn(2+) contacts are provided by His1159, His1163, Cys1187, and Cys1190. The Integrase catalytic domain occupies Val1201–Ile1351. The Mg(2+) site is built by Asp1211, Asp1263, and Glu1299. The segment at residues Phe1370–Asp1417 is a DNA-binding region (integrase-type).

In terms of assembly, homotrimer; further assembles as hexamers of trimers. Matrix protein p17: Interacts with gp41 (via C-terminus). Interacts with host CALM1; this interaction induces a conformational change in the Matrix protein, triggering exposure of the myristate group. Interacts with host AP3D1; this interaction allows the polyprotein trafficking to multivesicular bodies during virus assembly. Part of the pre-integration complex (PIC) which is composed of viral genome, matrix protein, Vpr and integrase. Homodimer; the homodimer further multimerizes as homohexamers or homopentamers. Interacts with human PPIA/CYPA; This interaction stabilizes the capsid. Interacts with human NUP153. Interacts with host PDZD8; this interaction stabilizes the capsid. Interacts with monkey TRIM5; this interaction destabilizes the capsid. As to quaternary structure, homodimer, whose active site consists of two apposed aspartic acid residues. In terms of assembly, heterodimer of p66 RT and p51 RT (RT p66/p51). Heterodimerization of RT is essential for DNA polymerase activity. The overall folding of the subdomains is similar in p66 RT and p51 RT but the spatial arrangements of the subdomains are dramatically different. Homotetramer; may further associate as a homohexadecamer. Part of the pre-integration complex (PIC) which is composed of viral genome, matrix protein, Vpr and integrase. Interacts with human SMARCB1/INI1 and human PSIP1/LEDGF isoform 1. Interacts with human KPNA3; this interaction might play a role in nuclear import of the pre-integration complex. Interacts with human NUP153; this interaction might play a role in nuclear import of the pre-integration complex. It depends on Mg(2+) as a cofactor. Specific enzymatic cleavages by the viral protease yield mature proteins. The protease is released by autocatalytic cleavage. The polyprotein is cleaved during and after budding, this process is termed maturation. Proteolytic cleavage of p66 RT removes the RNase H domain to yield the p51 RT subunit. Nucleocapsid protein p7 might be further cleaved after virus entry. In terms of processing, tyrosine phosphorylated presumably in the virion by a host kinase. Phosphorylation is apparently not a major regulator of membrane association. Post-translationally, phosphorylated possibly by host MAPK1; this phosphorylation is necessary for Pin1-mediated virion uncoating. Methylated by host PRMT6, impairing its function by reducing RNA annealing and the initiation of reverse transcription.

The protein localises to the host cell membrane. It localises to the host endosome. It is found in the host multivesicular body. The protein resides in the virion membrane. Its subcellular location is the host nucleus. The protein localises to the host cytoplasm. It localises to the virion. It carries out the reaction Specific for a P1 residue that is hydrophobic, and P1' variable, but often Pro.. It catalyses the reaction Endohydrolysis of RNA in RNA/DNA hybrids. Three different cleavage modes: 1. sequence-specific internal cleavage of RNA. Human immunodeficiency virus type 1 and Moloney murine leukemia virus enzymes prefer to cleave the RNA strand one nucleotide away from the RNA-DNA junction. 2. RNA 5'-end directed cleavage 13-19 nucleotides from the RNA end. 3. DNA 3'-end directed cleavage 15-20 nucleotides away from the primer terminus.. The catalysed reaction is 3'-end directed exonucleolytic cleavage of viral RNA-DNA hybrid.. The enzyme catalyses DNA(n) + a 2'-deoxyribonucleoside 5'-triphosphate = DNA(n+1) + diphosphate. With respect to regulation, protease: The viral protease is inhibited by many synthetic protease inhibitors (PIs), such as amprenavir, atazanavir, indinavir, loprinavir, nelfinavir, ritonavir and saquinavir. Use of protease inhibitors in tritherapy regimens permit more ambitious therapeutic strategies. Reverse transcriptase/ribonuclease H: RT can be inhibited either by nucleoside RT inhibitors (NRTIs) or by non nucleoside RT inhibitors (NNRTIs). NRTIs act as chain terminators, whereas NNRTIs inhibit DNA polymerization by binding a small hydrophobic pocket near the RT active site and inducing an allosteric change in this region. Classical NRTIs are abacavir, adefovir (PMEA), didanosine (ddI), lamivudine (3TC), stavudine (d4T), tenofovir (PMPA), zalcitabine (ddC), and zidovudine (AZT). Classical NNRTIs are atevirdine (BHAP U-87201E), delavirdine, efavirenz (DMP-266), emivirine (I-EBU), and nevirapine (BI-RG-587). The tritherapies used as a basic effective treatment of AIDS associate two NRTIs and one NNRTI. In terms of biological role, mediates, with Gag polyprotein, the essential events in virion assembly, including binding the plasma membrane, making the protein-protein interactions necessary to create spherical particles, recruiting the viral Env proteins, and packaging the genomic RNA via direct interactions with the RNA packaging sequence (Psi). Gag-Pol polyprotein may regulate its own translation, by the binding genomic RNA in the 5'-UTR. At low concentration, the polyprotein would promote translation, whereas at high concentration, the polyprotein would encapsidate genomic RNA and then shut off translation. Functionally, targets the polyprotein to the plasma membrane via a multipartite membrane-binding signal, that includes its myristoylated N-terminus. Matrix protein is part of the pre-integration complex. Implicated in the release from host cell mediated by Vpu. Binds to RNA. Forms the conical core that encapsulates the genomic RNA-nucleocapsid complex in the virion. Most core are conical, with only 7% tubular. The core is constituted by capsid protein hexamer subunits. The core is disassembled soon after virion entry. Host restriction factors such as TRIM5-alpha or TRIMCyp bind retroviral capsids and cause premature capsid disassembly, leading to blocks in reverse transcription. Capsid restriction by TRIM5 is one of the factors which restricts HIV-1 to the human species. Host PIN1 apparently facilitates the virion uncoating. On the other hand, interactions with PDZD8 or CYPA stabilize the capsid. Its function is as follows. Encapsulates and protects viral dimeric unspliced genomic RNA (gRNA). Binds these RNAs through its zinc fingers. Acts as a nucleic acid chaperone which is involved in rearangement of nucleic acid secondary structure during gRNA retrotranscription. Also facilitates template switch leading to recombination. As part of the polyprotein, participates in gRNA dimerization, packaging, tRNA incorporation and virion assembly. In terms of biological role, aspartyl protease that mediates proteolytic cleavages of Gag and Gag-Pol polyproteins during or shortly after the release of the virion from the plasma membrane. Cleavages take place as an ordered, step-wise cascade to yield mature proteins. This process is called maturation. Displays maximal activity during the budding process just prior to particle release from the cell. Also cleaves Nef and Vif, probably concomitantly with viral structural proteins on maturation of virus particles. Hydrolyzes host EIF4GI and PABP1 in order to shut off the capped cellular mRNA translation. The resulting inhibition of cellular protein synthesis serves to ensure maximal viral gene expression and to evade host immune response. Also mediates cleavage of host YTHDF3. Mediates cleavage of host CARD8, thereby activating the CARD8 inflammasome, leading to the clearance of latent HIV-1 in patient CD4(+) T-cells after viral reactivation; in contrast, HIV-1 can evade CARD8-sensing when its protease remains inactive in infected cells prior to viral budding. Functionally, multifunctional enzyme that converts the viral RNA genome into dsDNA in the cytoplasm, shortly after virus entry into the cell. This enzyme displays a DNA polymerase activity that can copy either DNA or RNA templates, and a ribonuclease H (RNase H) activity that cleaves the RNA strand of RNA-DNA heteroduplexes in a partially processive 3' to 5' endonucleasic mode. Conversion of viral genomic RNA into dsDNA requires many steps. A tRNA(3)-Lys binds to the primer-binding site (PBS) situated at the 5'-end of the viral RNA. RT uses the 3' end of the tRNA primer to perform a short round of RNA-dependent minus-strand DNA synthesis. The reading proceeds through the U5 region and ends after the repeated (R) region which is present at both ends of viral RNA. The portion of the RNA-DNA heteroduplex is digested by the RNase H, resulting in a ssDNA product attached to the tRNA primer. This ssDNA/tRNA hybridizes with the identical R region situated at the 3' end of viral RNA. This template exchange, known as minus-strand DNA strong stop transfer, can be either intra- or intermolecular. RT uses the 3' end of this newly synthesized short ssDNA to perform the RNA-dependent minus-strand DNA synthesis of the whole template. RNase H digests the RNA template except for two polypurine tracts (PPTs) situated at the 5'-end and near the center of the genome. It is not clear if both polymerase and RNase H activities are simultaneous. RNase H probably can proceed both in a polymerase-dependent (RNA cut into small fragments by the same RT performing DNA synthesis) and a polymerase-independent mode (cleavage of remaining RNA fragments by free RTs). Secondly, RT performs DNA-directed plus-strand DNA synthesis using the PPTs that have not been removed by RNase H as primers. PPTs and tRNA primers are then removed by RNase H. The 3' and 5' ssDNA PBS regions hybridize to form a circular dsDNA intermediate. Strand displacement synthesis by RT to the PBS and PPT ends produces a blunt ended, linear dsDNA copy of the viral genome that includes long terminal repeats (LTRs) at both ends. Catalyzes viral DNA integration into the host chromosome, by performing a series of DNA cutting and joining reactions. This enzyme activity takes place after virion entry into a cell and reverse transcription of the RNA genome in dsDNA. The first step in the integration process is 3' processing. This step requires a complex comprising the viral genome, matrix protein, Vpr and integrase. This complex is called the pre-integration complex (PIC). The integrase protein removes 2 nucleotides from each 3' end of the viral DNA, leaving recessed CA OH's at the 3' ends. In the second step, the PIC enters cell nucleus. This process is mediated through integrase and Vpr proteins, and allows the virus to infect a non dividing cell. This ability to enter the nucleus is specific of lentiviruses, other retroviruses cannot and rely on cell division to access cell chromosomes. In the third step, termed strand transfer, the integrase protein joins the previously processed 3' ends to the 5' ends of strands of target cellular DNA at the site of integration. The 5'-ends are produced by integrase-catalyzed staggered cuts, 5 bp apart. A Y-shaped, gapped, recombination intermediate results, with the 5'-ends of the viral DNA strands and the 3' ends of target DNA strands remaining unjoined, flanking a gap of 5 bp. The last step is viral DNA integration into host chromosome. This involves host DNA repair synthesis in which the 5 bp gaps between the unjoined strands are filled in and then ligated. Since this process occurs at both cuts flanking the HIV genome, a 5 bp duplication of host DNA is produced at the ends of HIV-1 integration. Alternatively, Integrase may catalyze the excision of viral DNA just after strand transfer, this is termed disintegration. The polypeptide is Gag-Pol polyprotein (gag-pol) (Human immunodeficiency virus type 1 group M subtype B (isolate NY5) (HIV-1)).